Reading from the N-terminus, the 255-residue chain is Acetyl-coenzyme A carboxylase carboxyl transferase subunit alpha (255 aa).

The CoA carboxyltransferase C-terminal domain maps to 1–235; sequence MNIAKIVREA…KKELQTELAR (235 aa).

Belongs to the AccA family. In terms of assembly, acetyl-CoA carboxylase is a heterohexamer composed of biotin carboxyl carrier protein (AccB), biotin carboxylase (AccC) and two subunits each of ACCase subunit alpha (AccA) and ACCase subunit beta (AccD).

It is found in the cytoplasm. The catalysed reaction is N(6)-carboxybiotinyl-L-lysyl-[protein] + acetyl-CoA = N(6)-biotinyl-L-lysyl-[protein] + malonyl-CoA. The protein operates within lipid metabolism; malonyl-CoA biosynthesis; malonyl-CoA from acetyl-CoA: step 1/1. Its function is as follows. Component of the acetyl coenzyme A carboxylase (ACC) complex. First, biotin carboxylase catalyzes the carboxylation of biotin on its carrier protein (BCCP) and then the CO(2) group is transferred by the carboxyltransferase to acetyl-CoA to form malonyl-CoA. This chain is Acetyl-coenzyme A carboxylase carboxyl transferase subunit alpha, found in Streptococcus pneumoniae serotype 19F (strain G54).